We begin with the raw amino-acid sequence, 214 residues long: U3 small nucleolar RNA-associated protein 16 (214 aa).

Positions 1 to 10 are enriched in basic and acidic residues; that stretch reads MSNGHVKFDA. Positions 1-106 are disordered; that stretch reads MSNGHVKFDA…KSVNETEVTD (106 aa). Phosphoserine is present on serine 16. Basic and acidic residues predominate over residues 22-41; it reads DRQDDVLVISKKDKEVHSSS. A compositionally biased stretch (acidic residues) spans 42–52; that stretch reads DEESDDDDAPQ. A phosphoserine mark is found at serine 45, serine 65, and serine 144. The segment covering 54–75 has biased composition (basic and acidic residues); the sequence is EGLHSGKSEVESQITQREEAIR. The segment at 182–214 is disordered; that stretch reads STTQDSKTLPPKKESSIIRSKDRWLNRKALNKG. A compositionally biased stretch (basic and acidic residues) spans 192 to 206; that stretch reads PKKESSIIRSKDRWL.

It belongs to the UTP16 family. In terms of assembly, part of the small subunit (SSU) processome composed of at least 40 protein subunits and the RNA chaperone small nucleolar RNA (snoRNA) U3. Interacts with snoRNA U3. Interacts with MPP10.

It is found in the nucleus. Its subcellular location is the nucleolus. Functionally, functions as part of the small subunit (SSU) processome, first precursor of the small eukaryotic ribosomal subunit that coordinates the first two steps of ribosome biogenesis in transcription of the primary transcript pre-RNA and pre-18S processing. During the assembly of the SSU processome in the nucleolus, many ribosome biogenesis factors, an RNA chaperone and ribosomal proteins associate with the nascent pre-rRNA and work in concert to generate RNA folding, modifications, rearrangements and cleavage as well as targeted degradation of pre-ribosomal RNA by the RNA exosome. Has a role in bud site selection maybe via the regulation of expression of bipolar budding components. In Saccharomyces cerevisiae (strain ATCC 204508 / S288c) (Baker's yeast), this protein is U3 small nucleolar RNA-associated protein 16 (BUD21).